A 128-amino-acid chain; its full sequence is DELTA-urthionin-Uf1a (128 aa).

An N-terminal signal peptide occupies residues 1-24 (MEGKTVIVSLLLLSIVVGQIQVEA). Intrachain disulfides connect C27–C64, C28–C56, and C40–C50. Positions 67–128 (LSIPEVTGEA…LCTKNSIETA (62 aa)) are cleaved as a propeptide — acidic domain.

It belongs to the plant thionin (TC 1.C.44) family. As to expression, expressed in trichomes, that are stiff epidermal hairs located on the surface of petioles and leaves.

Its subcellular location is the secreted. Plant defense protein that causes pain by probable disruption of cell membranes. Shows cytotoxic activity against the neuroblastoma cell line SH-SY5Y and slightly weaker activity against several non-neuronal cell lines. In vivo, intraplantar injection into mice causes several nocifensive responses, along with swelling and redness. The chain is DELTA-urthionin-Uf1a from Urtica ferox (Tree nettle).